The primary structure comprises 212 residues: uncharacterized protein (212 aa).

Residues G53 and E74 each coordinate S-adenosyl-L-methionine.

The protein belongs to the methyltransferase superfamily. YrrT family.

In terms of biological role, could be a S-adenosyl-L-methionine-dependent methyltransferase. This is an uncharacterized protein from Exiguobacterium sibiricum (strain DSM 17290 / CCUG 55495 / CIP 109462 / JCM 13490 / 255-15).